The sequence spans 259 residues: TLC domain-containing protein 4 (259 aa).

6 helical membrane-spanning segments follow: residues 6–26, 53–73, 86–106, 117–133, 172–192, and 213–233; these read FISY…FSII, CVST…LAYD, FWVK…LLLL, YMVC…GYVL, PVLL…IAVI, and IGPQ…NVFW. A TLC domain is found at 44-246; it reads GKQCEWDSRC…IARGFYKVVK (203 aa).

Belongs to the TLCD4 family.

The protein resides in the membrane. The polypeptide is TLC domain-containing protein 4 (tlcd4) (Xenopus tropicalis (Western clawed frog)).